Here is an 832-residue protein sequence, read N- to C-terminus: Protein P (832 aa).

A terminal protein domain (TP) region spans residues 1 to 177; it reads MPLSYQHFRK…FCGSPYSWEQ (177 aa). A spacer region spans residues 178-335; it reads ELQHGAESFH…YCLSHLVSLL (158 aa). The tract at residues 336–679 is polymerase/reverse transcriptase domain (RT); that stretch reads DDWGPCTEHG…YSTLYPVARQ (344 aa). In terms of domain architecture, Reverse transcriptase spans 346 to 589; sequence EHHIRIPRTP…YSLHFMGYVI (244 aa). Positions 418, 540, and 541 each coordinate Mg(2+).

It belongs to the hepadnaviridae P protein family.

It carries out the reaction DNA(n) + a 2'-deoxyribonucleoside 5'-triphosphate = DNA(n+1) + diphosphate. It catalyses the reaction Endonucleolytic cleavage to 5'-phosphomonoester.. Its activity is regulated as follows. Activated by host HSP70 and HSP40 in vitro to be able to bind the epsilon loop of the pgRNA. Because deletion of the RNase H region renders the protein partly chaperone-independent, the chaperones may be needed indirectly to relieve occlusion of the RNA-binding site by this domain. Inhibited by several reverse-transcriptase inhibitors: Lamivudine, Adefovir and Entecavir. Its function is as follows. Multifunctional enzyme that converts the viral RNA genome into dsDNA in viral cytoplasmic capsids. This enzyme displays a DNA polymerase activity that can copy either DNA or RNA templates, and a ribonuclease H (RNase H) activity that cleaves the RNA strand of RNA-DNA heteroduplexes in a partially processive 3'- to 5'-endonucleasic mode. Neo-synthesized pregenomic RNA (pgRNA) are encapsidated together with the P protein, and reverse-transcribed inside the nucleocapsid. Initiation of reverse-transcription occurs first by binding the epsilon loop on the pgRNA genome, and is initiated by protein priming, thereby the 5'-end of (-)DNA is covalently linked to P protein. Partial (+)DNA is synthesized from the (-)DNA template and generates the relaxed circular DNA (RC-DNA) genome. After budding and infection, the RC-DNA migrates in the nucleus, and is converted into a plasmid-like covalently closed circular DNA (cccDNA). The activity of P protein does not seem to be necessary for cccDNA generation, and is presumably released from (+)DNA by host nuclear DNA repair machinery. This Pan troglodytes (Chimpanzee) protein is Protein P.